A 527-amino-acid chain; its full sequence is Bifunctional purine biosynthesis protein PurH (527 aa).

The MGS-like domain maps to 8 to 156 (AGAKRPIRRA…KNHPSVAVVV (149 aa)).

Belongs to the PurH family.

The catalysed reaction is (6R)-10-formyltetrahydrofolate + 5-amino-1-(5-phospho-beta-D-ribosyl)imidazole-4-carboxamide = 5-formamido-1-(5-phospho-D-ribosyl)imidazole-4-carboxamide + (6S)-5,6,7,8-tetrahydrofolate. It carries out the reaction IMP + H2O = 5-formamido-1-(5-phospho-D-ribosyl)imidazole-4-carboxamide. The protein operates within purine metabolism; IMP biosynthesis via de novo pathway; 5-formamido-1-(5-phospho-D-ribosyl)imidazole-4-carboxamide from 5-amino-1-(5-phospho-D-ribosyl)imidazole-4-carboxamide (10-formyl THF route): step 1/1. Its pathway is purine metabolism; IMP biosynthesis via de novo pathway; IMP from 5-formamido-1-(5-phospho-D-ribosyl)imidazole-4-carboxamide: step 1/1. The protein is Bifunctional purine biosynthesis protein PurH of Mycobacterium sp. (strain KMS).